The sequence spans 155 residues: Myosin light chain alkali (155 aa).

EF-hand domains lie at 7–41 (REVENVEFVFEVMGSPGEGIDAFDLGDALRALNLN) and 80–115 (GCYEDFIECLKLYDKEENGTMLLAELQHALLALGES).

As to quaternary structure, myosin is a hexamer of 2 heavy chains and 4 light chains.

The polypeptide is Myosin light chain alkali (Mlc1) (Drosophila virilis (Fruit fly)).